The following is a 286-amino-acid chain: UDP-3-O-acyl-N-acetylglucosamine deacetylase (286 aa).

The Zn(2+) site is built by histidine 79, histidine 237, and aspartate 241. The active-site Proton donor is histidine 264.

It belongs to the LpxC family. The cofactor is Zn(2+).

It carries out the reaction a UDP-3-O-[(3R)-3-hydroxyacyl]-N-acetyl-alpha-D-glucosamine + H2O = a UDP-3-O-[(3R)-3-hydroxyacyl]-alpha-D-glucosamine + acetate. Its pathway is glycolipid biosynthesis; lipid IV(A) biosynthesis; lipid IV(A) from (3R)-3-hydroxytetradecanoyl-[acyl-carrier-protein] and UDP-N-acetyl-alpha-D-glucosamine: step 2/6. Functionally, catalyzes the hydrolysis of UDP-3-O-myristoyl-N-acetylglucosamine to form UDP-3-O-myristoylglucosamine and acetate, the committed step in lipid A biosynthesis. This chain is UDP-3-O-acyl-N-acetylglucosamine deacetylase, found in Chlamydia trachomatis serovar L2 (strain ATCC VR-902B / DSM 19102 / 434/Bu).